A 451-amino-acid chain; its full sequence is Probable carboxypeptidase PMAA_093910 (451 aa).

Positions 1-19 are cleaved as a signal peptide; sequence MKVSSLLPSVLLLVGATRA. N149 is a glycosylation site (N-linked (GlcNAc...) asparagine). Zn(2+) is bound at residue D171. E203 functions as the Proton acceptor in the catalytic mechanism. E204 lines the Zn(2+) pocket. N354 carries an N-linked (GlcNAc...) asparagine glycan.

Belongs to the peptidase M20A family. Requires Zn(2+) as cofactor.

The protein localises to the secreted. The protein is Probable carboxypeptidase PMAA_093910 of Talaromyces marneffei (strain ATCC 18224 / CBS 334.59 / QM 7333) (Penicillium marneffei).